The chain runs to 352 residues: Phosphoribosylformylglycinamidine cyclo-ligase (352 aa).

Belongs to the AIR synthase family.

The protein resides in the cytoplasm. The catalysed reaction is 2-formamido-N(1)-(5-O-phospho-beta-D-ribosyl)acetamidine + ATP = 5-amino-1-(5-phospho-beta-D-ribosyl)imidazole + ADP + phosphate + H(+). The protein operates within purine metabolism; IMP biosynthesis via de novo pathway; 5-amino-1-(5-phospho-D-ribosyl)imidazole from N(2)-formyl-N(1)-(5-phospho-D-ribosyl)glycinamide: step 2/2. This chain is Phosphoribosylformylglycinamidine cyclo-ligase, found in Coxiella burnetii (strain RSA 331 / Henzerling II).